Reading from the N-terminus, the 367-residue chain is Ribosomal lysine N-methyltransferase 5 (367 aa).

Residues Trp110, 170 to 172, Asp192, Trp256, and Met288 each bind S-adenosyl-L-methionine; that span reads GAG.

It belongs to the class I-like SAM-binding methyltransferase superfamily. RKM5 family.

In terms of biological role, S-adenosyl-L-methionine-dependent protein-lysine N-methyltransferase that monomethylates 60S ribosomal protein L1 (RPL1A and RPL1B) at 'Lys-46'. This chain is Ribosomal lysine N-methyltransferase 5 (RKM5), found in Saccharomyces cerevisiae (strain JAY291) (Baker's yeast).